Consider the following 118-residue polypeptide: MSLIILTRDDEPRIFTPDSDAASPALHSTSPLPDPASASPLHREEKILPKVCNIVSCLSFSLPASPTDSGLASPTIITREGQQFWAKCLIWKYQLYLHGLHKKSDGRRDKQISASPST.

The interval 1-39 is disordered; sequence MSLIILTRDDEPRIFTPDSDAASPALHSTSPLPDPASAS. A compositionally biased stretch (low complexity) spans 28-39; it reads STSPLPDPASAS.

Mainly expressed in placenta.

The polypeptide is Down syndrome critical region protein 4 (DSCR4) (Homo sapiens (Human)).